The following is a 262-amino-acid chain: Indole-3-glycerol phosphate synthase (262 aa).

Belongs to the TrpC family.

It catalyses the reaction 1-(2-carboxyphenylamino)-1-deoxy-D-ribulose 5-phosphate + H(+) = (1S,2R)-1-C-(indol-3-yl)glycerol 3-phosphate + CO2 + H2O. The protein operates within amino-acid biosynthesis; L-tryptophan biosynthesis; L-tryptophan from chorismate: step 4/5. The chain is Indole-3-glycerol phosphate synthase from Bordetella pertussis (strain Tohama I / ATCC BAA-589 / NCTC 13251).